An 82-amino-acid chain; its full sequence is Penaeidin-3a (82 aa).

A signal peptide spans 1 to 19; sequence MRLVVCLVFLASFALVCQG. Gln20 carries the pyrrolidone carboxylic acid modification. 3 disulfides stabilise this stretch: Cys51-Cys66, Cys55-Cys73, and Cys67-Cys74. Residue Ser81 is modified to Serine amide.

In terms of processing, the N-terminus forms pyrrolidone carboxylic acid. In terms of tissue distribution, higher expression in hemocytes and to a lesser extent in heart, testis, gills, intestine, lymphoid organ and hepatopancreas. Traces in eyes and subcuticular epithelium. Not present in the brain.

The protein resides in the cytoplasmic granule. In terms of biological role, antibacterial activity against M.luteus and E.coli bacteria. Antifungal activity against N.crassa and F.oxysporum. Presents chitin-binding activity. This Penaeus vannamei (Whiteleg shrimp) protein is Penaeidin-3a.